Consider the following 239-residue polypeptide: Purine nucleoside phosphorylase DeoD-type (239 aa).

A purine D-ribonucleoside is bound at residue His-5. Phosphate is bound by residues Gly-21, Arg-25, Arg-44, and 88-91 (RVGS). Residues 180-182 (EME) and 204-205 (SD) contribute to the a purine D-ribonucleoside site. Asp-205 functions as the Proton donor in the catalytic mechanism.

It belongs to the PNP/UDP phosphorylase family. In terms of assembly, homohexamer; trimer of homodimers.

The enzyme catalyses a purine D-ribonucleoside + phosphate = a purine nucleobase + alpha-D-ribose 1-phosphate. It carries out the reaction a purine 2'-deoxy-D-ribonucleoside + phosphate = a purine nucleobase + 2-deoxy-alpha-D-ribose 1-phosphate. Its function is as follows. Catalyzes the reversible phosphorolytic breakdown of the N-glycosidic bond in the beta-(deoxy)ribonucleoside molecules, with the formation of the corresponding free purine bases and pentose-1-phosphate. In Salmonella gallinarum (strain 287/91 / NCTC 13346), this protein is Purine nucleoside phosphorylase DeoD-type.